Reading from the N-terminus, the 1269-residue chain is DNA-directed RNA polymerase subunit beta (1269 aa).

It belongs to the RNA polymerase beta chain family. In terms of assembly, the RNAP catalytic core consists of 2 alpha, 1 beta, 1 beta' and 1 omega subunit. When a sigma factor is associated with the core the holoenzyme is formed, which can initiate transcription.

It carries out the reaction RNA(n) + a ribonucleoside 5'-triphosphate = RNA(n+1) + diphosphate. DNA-dependent RNA polymerase catalyzes the transcription of DNA into RNA using the four ribonucleoside triphosphates as substrates. This Porphyromonas gingivalis (strain ATCC 33277 / DSM 20709 / CIP 103683 / JCM 12257 / NCTC 11834 / 2561) protein is DNA-directed RNA polymerase subunit beta.